The following is a 330-amino-acid chain: Phosphate acyltransferase (330 aa).

This sequence belongs to the PlsX family. As to quaternary structure, homodimer. Probably interacts with PlsY.

The protein localises to the cytoplasm. It catalyses the reaction a fatty acyl-[ACP] + phosphate = an acyl phosphate + holo-[ACP]. It functions in the pathway lipid metabolism; phospholipid metabolism. Catalyzes the reversible formation of acyl-phosphate (acyl-PO(4)) from acyl-[acyl-carrier-protein] (acyl-ACP). This enzyme utilizes acyl-ACP as fatty acyl donor, but not acyl-CoA. The sequence is that of Phosphate acyltransferase from Lysinibacillus sphaericus (strain C3-41).